Here is a 332-residue protein sequence, read N- to C-terminus: tRNA-dihydrouridine synthase B (332 aa).

Residues 19–21 (PMA) and Gln-73 contribute to the FMN site. Cys-103 serves as the catalytic Proton donor. FMN contacts are provided by residues Lys-142, 203–205 (NGD), and 227–228 (GR).

The protein belongs to the Dus family. DusB subfamily. It depends on FMN as a cofactor.

The enzyme catalyses a 5,6-dihydrouridine in tRNA + NAD(+) = a uridine in tRNA + NADH + H(+). It carries out the reaction a 5,6-dihydrouridine in tRNA + NADP(+) = a uridine in tRNA + NADPH + H(+). Its function is as follows. Catalyzes the synthesis of 5,6-dihydrouridine (D), a modified base found in the D-loop of most tRNAs, via the reduction of the C5-C6 double bond in target uridines. The chain is tRNA-dihydrouridine synthase B from Pseudomonas aeruginosa (strain ATCC 15692 / DSM 22644 / CIP 104116 / JCM 14847 / LMG 12228 / 1C / PRS 101 / PAO1).